Consider the following 357-residue polypeptide: 3-dehydroquinate synthase (357 aa).

NAD(+) is bound by residues 104 to 108 (GVVGD), 128 to 129 (TT), Lys-141, and 168 to 171 (FLET). 3 residues coordinate Zn(2+): Glu-183, His-243, and His-260.

This sequence belongs to the sugar phosphate cyclases superfamily. Dehydroquinate synthase family. Requires Co(2+) as cofactor. It depends on Zn(2+) as a cofactor. The cofactor is NAD(+).

It localises to the cytoplasm. It carries out the reaction 7-phospho-2-dehydro-3-deoxy-D-arabino-heptonate = 3-dehydroquinate + phosphate. It functions in the pathway metabolic intermediate biosynthesis; chorismate biosynthesis; chorismate from D-erythrose 4-phosphate and phosphoenolpyruvate: step 2/7. In terms of biological role, catalyzes the conversion of 3-deoxy-D-arabino-heptulosonate 7-phosphate (DAHP) to dehydroquinate (DHQ). The chain is 3-dehydroquinate synthase from Streptococcus pyogenes serotype M5 (strain Manfredo).